The chain runs to 299 residues: Putative hydrolase YtaP (299 aa).

This sequence belongs to the dienelactone hydrolase family.

This Bacillus subtilis (strain 168) protein is Putative hydrolase YtaP (ytaP).